We begin with the raw amino-acid sequence, 445 residues long: Histidinol dehydrogenase (445 aa).

Residues Tyr-136, Gln-200, and Asn-228 each coordinate NAD(+). Substrate-binding residues include Thr-251, Gln-273, and His-276. Zn(2+) contacts are provided by Gln-273 and His-276. Catalysis depends on proton acceptor residues Glu-342 and His-343. Residues His-343, Asp-376, Glu-430, and His-435 each coordinate substrate. Asp-376 contributes to the Zn(2+) binding site. Position 435 (His-435) interacts with Zn(2+).

This sequence belongs to the histidinol dehydrogenase family. Zn(2+) serves as cofactor.

It catalyses the reaction L-histidinol + 2 NAD(+) + H2O = L-histidine + 2 NADH + 3 H(+). It functions in the pathway amino-acid biosynthesis; L-histidine biosynthesis; L-histidine from 5-phospho-alpha-D-ribose 1-diphosphate: step 9/9. Catalyzes the sequential NAD-dependent oxidations of L-histidinol to L-histidinaldehyde and then to L-histidine. The protein is Histidinol dehydrogenase (hisD) of Mycolicibacterium smegmatis (Mycobacterium smegmatis).